The sequence spans 266 residues: Large ribosomal subunit protein uL3 (266 aa).

A disordered region spans residues 124–149 (NQKIGPKSHGGGGGSKPVRQTGSLGD).

Belongs to the universal ribosomal protein uL3 family. Part of the 50S ribosomal subunit. Forms a cluster with proteins L14 and L19.

One of the primary rRNA binding proteins, it binds directly near the 3'-end of the 23S rRNA, where it nucleates assembly of the 50S subunit. The chain is Large ribosomal subunit protein uL3 from Mycoplasmopsis pulmonis (strain UAB CTIP) (Mycoplasma pulmonis).